The following is a 353-amino-acid chain: Ig alpha-1 chain C region (353 aa).

One can recognise an Ig-like 1 domain in the interval 6 to 98 (PKVFPLSLCS…HYTNPSQDVT (93 aa)). 2 disulfides stabilise this stretch: C26-C85 and C77-C101. The disordered stretch occupies residues 96-121 (DVTVPCRVPSTPPTPSPSTPPTPSPP). A compositionally biased stretch (pro residues) spans 105 to 121 (STPPTPSPSTPPTPSPP). Intrachain disulfides connect C123–C180, C147–C204, and C250–C313. 2 consecutive Ig-like domains span residues 125–220 (PRLS…ATLS) and 228–330 (PEVH…KTID). A glycan (N-linked (GlcNAc...) asparagine) is linked at N144. N340 is a glycosylation site (N-linked (GlcNAc...) asparagine). C352 is a binding site for 3-hydroxy-L-kynurenine.

Monomeric or polymeric. In terms of processing, 3-Hydroxykynurenine, an oxidized tryptophan metabolite that is common in biological fluids, reacts with alpha-1-microglobulin to form heterogeneous polycyclic chromophores including hydroxanthommatin. The chromophore reacts with accessible cysteines forming non-reducible thioether cross-links with Ig alpha-1 chain C region Cys-352.

In terms of biological role, ig alpha is the major immunoglobulin class in body secretions. It may serve both to defend against local infection and to prevent access of foreign antigens to the general immunologic system. The protein is Ig alpha-1 chain C region (IGHA1) of Gorilla gorilla gorilla (Western lowland gorilla).